The following is a 251-amino-acid chain: Ribonuclease HII (251 aa).

An RNase H type-2 domain is found at 32–223; the sequence is GPVAGVDEAG…VRERLGLRPL (192 aa). Positions 38, 39, and 132 each coordinate a divalent metal cation.

The protein belongs to the RNase HII family. Requires Mn(2+) as cofactor. It depends on Mg(2+) as a cofactor.

Its subcellular location is the cytoplasm. The enzyme catalyses Endonucleolytic cleavage to 5'-phosphomonoester.. In terms of biological role, endonuclease that specifically degrades the RNA of RNA-DNA hybrids. In Nocardia farcinica (strain IFM 10152), this protein is Ribonuclease HII.